The following is a 372-amino-acid chain: MSKKDYYDLLEVGRNASIDEIKKAYKKLALKYHPDRNPGNQEAEEKFKEVTAAYEVLSDSEKRAGYDRYGHEGASGGFQGFSSAGDFSDIFNDFFGGGFGGGASRSRAKRSTTGVSGADLRYDLEITLEDAFKGIQAPIHYVTNVKCDTCQGTGGEGAIKPVQCHTCQGSGRIRTQQGFFTIERTCTTCYGEGEIIQNKCKKCGGSGRRRDEVNISVSIPKGIEEGAKVRISGKGEAGTKGGKSGDLYVYVKIIFHKIFARNKADLHCKVPIRMTLAVLGGEIDIQSIDGAKIKVKVPEGTQTGTKLRCREKGMPYMNSHARGDLYVQVIVETLNPKNLTKKQIELLKALEEEENASVQQQSEGFFSKVKKK.

Residues aspartate 5–glycine 70 enclose the J domain. The segment at glycine 134–glutamate 212 adopts a CR-type zinc-finger fold. Cysteine 147, cysteine 150, cysteine 164, cysteine 167, cysteine 186, cysteine 189, cysteine 200, and cysteine 203 together coordinate Zn(2+). 4 CXXCXGXG motif repeats span residues cysteine 147–glycine 154, cysteine 164–glycine 171, cysteine 186–glycine 193, and cysteine 200–glycine 207.

It belongs to the DnaJ family. In terms of assembly, homodimer. It depends on Zn(2+) as a cofactor.

Its subcellular location is the cytoplasm. Functionally, participates actively in the response to hyperosmotic and heat shock by preventing the aggregation of stress-denatured proteins and by disaggregating proteins, also in an autonomous, DnaK-independent fashion. Unfolded proteins bind initially to DnaJ; upon interaction with the DnaJ-bound protein, DnaK hydrolyzes its bound ATP, resulting in the formation of a stable complex. GrpE releases ADP from DnaK; ATP binding to DnaK triggers the release of the substrate protein, thus completing the reaction cycle. Several rounds of ATP-dependent interactions between DnaJ, DnaK and GrpE are required for fully efficient folding. Also involved, together with DnaK and GrpE, in the DNA replication of plasmids through activation of initiation proteins. The chain is Chaperone protein DnaJ from Wolbachia sp. subsp. Drosophila simulans (strain wRi).